Reading from the N-terminus, the 198-residue chain is Glycerol-3-phosphate acyltransferase 1 (198 aa).

5 helical membrane passes run 5–25 (ALLA…AWLA), 52–72 (GPAL…VLLA), 81–101 (WAAL…FLAF), 111–131 (FGVI…LAIA), and 138–158 (FVSA…LVLP).

The protein belongs to the PlsY family. As to quaternary structure, probably interacts with PlsX.

The protein resides in the cell membrane. The catalysed reaction is an acyl phosphate + sn-glycerol 3-phosphate = a 1-acyl-sn-glycero-3-phosphate + phosphate. The protein operates within lipid metabolism; phospholipid metabolism. Its function is as follows. Catalyzes the transfer of an acyl group from acyl-phosphate (acyl-PO(4)) to glycerol-3-phosphate (G3P) to form lysophosphatidic acid (LPA). This enzyme utilizes acyl-phosphate as fatty acyl donor, but not acyl-CoA or acyl-ACP. This is Glycerol-3-phosphate acyltransferase 1 from Deinococcus radiodurans (strain ATCC 13939 / DSM 20539 / JCM 16871 / CCUG 27074 / LMG 4051 / NBRC 15346 / NCIMB 9279 / VKM B-1422 / R1).